The sequence spans 160 residues: Keratin-associated protein 13-4 (160 aa).

4 consecutive repeat copies span residues 41 to 50, 51 to 60, 61 to 70, and 77 to 86. The 4 X 10 AA approximate repeats stretch occupies residues 41–86; sequence CQLGSSLYRDCQKTCWEPASCQKSCYHPRTSMLCCPCQTTCSGSLG.

The protein belongs to the PMG family. In terms of assembly, interacts with hair keratins.

In terms of biological role, in the hair cortex, hair keratin intermediate filaments are embedded in an interfilamentous matrix, consisting of hair keratin-associated proteins (KRTAP), which are essential for the formation of a rigid and resistant hair shaft through their extensive disulfide bond cross-linking with abundant cysteine residues of hair keratins. The matrix proteins include the high-sulfur and high-glycine-tyrosine keratins. The protein is Keratin-associated protein 13-4 (KRTAP13-4) of Hylobates agilis (Agile gibbon).